Here is a 141-residue protein sequence, read N- to C-terminus: Nucleoside diphosphate kinase (141 aa).

Positions 11, 59, 87, 93, 104, and 114 each coordinate ATP. Catalysis depends on H117, which acts as the Pros-phosphohistidine intermediate.

It belongs to the NDK family. In terms of assembly, homotetramer. Mg(2+) is required as a cofactor.

It localises to the cytoplasm. It catalyses the reaction a 2'-deoxyribonucleoside 5'-diphosphate + ATP = a 2'-deoxyribonucleoside 5'-triphosphate + ADP. The enzyme catalyses a ribonucleoside 5'-diphosphate + ATP = a ribonucleoside 5'-triphosphate + ADP. In terms of biological role, major role in the synthesis of nucleoside triphosphates other than ATP. The ATP gamma phosphate is transferred to the NDP beta phosphate via a ping-pong mechanism, using a phosphorylated active-site intermediate. In Variovorax paradoxus (strain S110), this protein is Nucleoside diphosphate kinase.